A 700-amino-acid chain; its full sequence is Probable pre-mRNA-splicing factor ATP-dependent RNA helicase DEAH4 (700 aa).

At alanine 2 the chain carries N-acetylalanine. The 165-residue stretch at 14–178 (VETVEKNSVV…FSGCPVLNVP (165 aa)) folds into the Helicase ATP-binding domain. 27-34 (GETGSGKS) contacts ATP. A DEAH box motif is present at residues 124 to 127 (DEAH). The region spanning 200–377 (SLKVAIDIHV…GSVLYLKSLD (178 aa)) is the Helicase C-terminal domain. 2 disordered regions span residues 463 to 486 (PARSKPSEKKRKHDEDSNLPNGSG) and 654 to 682 (GPAPSFKVPEEKTELSKNNAETPAVSENV).

The protein belongs to the DEAD box helicase family. DEAH subfamily. PRP22 sub-subfamily.

The enzyme catalyses ATP + H2O = ADP + phosphate + H(+). Its function is as follows. May be involved in pre-mRNA splicing. This is Probable pre-mRNA-splicing factor ATP-dependent RNA helicase DEAH4 from Arabidopsis thaliana (Mouse-ear cress).